The sequence spans 206 residues: Protein GrpE (206 aa).

The segment covering 1-17 (MSNESIKAEQDLIHEGV) has biased composition (basic and acidic residues). Residues 1–20 (MSNESIKAEQDLIHEGVESE) are disordered.

It belongs to the GrpE family. In terms of assembly, homodimer.

It localises to the cytoplasm. In terms of biological role, participates actively in the response to hyperosmotic and heat shock by preventing the aggregation of stress-denatured proteins, in association with DnaK and GrpE. It is the nucleotide exchange factor for DnaK and may function as a thermosensor. Unfolded proteins bind initially to DnaJ; upon interaction with the DnaJ-bound protein, DnaK hydrolyzes its bound ATP, resulting in the formation of a stable complex. GrpE releases ADP from DnaK; ATP binding to DnaK triggers the release of the substrate protein, thus completing the reaction cycle. Several rounds of ATP-dependent interactions between DnaJ, DnaK and GrpE are required for fully efficient folding. The polypeptide is Protein GrpE (Shewanella oneidensis (strain ATCC 700550 / JCM 31522 / CIP 106686 / LMG 19005 / NCIMB 14063 / MR-1)).